The following is a 417-amino-acid chain: Gamma-glutamyl phosphate reductase (417 aa).

This sequence belongs to the gamma-glutamyl phosphate reductase family.

It is found in the cytoplasm. It carries out the reaction L-glutamate 5-semialdehyde + phosphate + NADP(+) = L-glutamyl 5-phosphate + NADPH + H(+). It functions in the pathway amino-acid biosynthesis; L-proline biosynthesis; L-glutamate 5-semialdehyde from L-glutamate: step 2/2. Catalyzes the NADPH-dependent reduction of L-glutamate 5-phosphate into L-glutamate 5-semialdehyde and phosphate. The product spontaneously undergoes cyclization to form 1-pyrroline-5-carboxylate. The protein is Gamma-glutamyl phosphate reductase of Proteus mirabilis (strain HI4320).